Consider the following 385-residue polypeptide: MFKKTKITILGATGSIGDSTLAVIRETNDFEVFALTAFSNVEKLAELCQEFKPKFAVVPDLSKKQKLQSLVTDVEVLVGESGLEKVSSLAEVDIVMSAIVGIAGLKPTFAAAKAGKKILLANKESLVTAGHLLIDEVVKNNAQLIPVDSEHNAIFQCIDNHDKKCLPEIDKIILTASGGPFRDKQLHELTDVTPEQACNHPNWQMGRKISVDSSTMVNKALEVIEAYWLFSVSADKIGVLIHPQSVIHSMVRYVDGSYIAQLGVPDMKTPIANAMYYPKRGSVNVESLDFTKYQLTFREACFERFGALKIVFNNLQNKNYAANIVFNAANEELVAAFLNKKIKYLEIIEVNKKVTKELNFENPKNIEEVFEIDRKTREYVDSVLG.

Residues Thr13, Gly14, Ser15, Ile16, Asn40, and Asn122 each coordinate NADPH. A 1-deoxy-D-xylulose 5-phosphate-binding site is contributed by Lys123. An NADPH-binding site is contributed by Glu124. Asp148 serves as a coordination point for Mn(2+). 1-deoxy-D-xylulose 5-phosphate contacts are provided by Ser149, Glu150, Ser177, and His200. Glu150 serves as a coordination point for Mn(2+). Gly206 is a binding site for NADPH. The 1-deoxy-D-xylulose 5-phosphate site is built by Ser213, Asn218, Lys219, and Glu222. A Mn(2+)-binding site is contributed by Glu222.

This sequence belongs to the DXR family. Mg(2+) serves as cofactor. Mn(2+) is required as a cofactor.

It catalyses the reaction 2-C-methyl-D-erythritol 4-phosphate + NADP(+) = 1-deoxy-D-xylulose 5-phosphate + NADPH + H(+). It participates in isoprenoid biosynthesis; isopentenyl diphosphate biosynthesis via DXP pathway; isopentenyl diphosphate from 1-deoxy-D-xylulose 5-phosphate: step 1/6. Functionally, catalyzes the NADPH-dependent rearrangement and reduction of 1-deoxy-D-xylulose-5-phosphate (DXP) to 2-C-methyl-D-erythritol 4-phosphate (MEP). This Francisella tularensis subsp. novicida (strain U112) protein is 1-deoxy-D-xylulose 5-phosphate reductoisomerase.